We begin with the raw amino-acid sequence, 392 residues long: Elongation factor Tu (392 aa).

The 193-residue stretch at 10–202 (KVHVNVGTIG…VLDEYIEDPI (193 aa)) folds into the tr-type G domain. The segment at 19–26 (GHVDHGKT) is G1. Residue 19–26 (GHVDHGKT) coordinates GTP. Threonine 26 contacts Mg(2+). The segment at 60–64 (GITIN) is G2. The segment at 81–84 (DCPG) is G3. GTP is bound by residues 81-85 (DCPGH) and 136-139 (NKCD). The tract at residues 136-139 (NKCD) is G4. Positions 174-176 (SAL) are G5.

This sequence belongs to the TRAFAC class translation factor GTPase superfamily. Classic translation factor GTPase family. EF-Tu/EF-1A subfamily. In terms of assembly, monomer.

It localises to the cytoplasm. The catalysed reaction is GTP + H2O = GDP + phosphate + H(+). GTP hydrolase that promotes the GTP-dependent binding of aminoacyl-tRNA to the A-site of ribosomes during protein biosynthesis. The sequence is that of Elongation factor Tu from Apple proliferation phytoplasma.